Reading from the N-terminus, the 1042-residue chain is Starch synthase 3, chloroplastic/amyloplastic (1042 aa).

A chloroplast-targeting transit peptide spans 1–44 (MISYFLNQDFSRKKQGRMAASGPKSSGPRGFGRRTTVGSAQKRT). Residues 1–63 (MISYFLNQDF…NATSTATNEV (63 aa)) are disordered. Residues 54 to 63 (NATSTATNEV) are compositionally biased toward polar residues. Residues 247–302 (ENFLLEEKLREQEKLAKEEAERERQKEEKRRIEAQKAAIEADRAQAKAETQKRREL) adopt a coiled-coil conformation. Residue lysine 608 coordinates ADP-alpha-D-glucose.

The protein belongs to the glycosyltransferase 1 family. Bacterial/plant glycogen synthase subfamily. In terms of tissue distribution, expressed in leaves and flowers.

It localises to the plastid. The protein localises to the chloroplast. It is found in the amyloplast. It catalyses the reaction [(1-&gt;4)-alpha-D-glucosyl](n) + ADP-alpha-D-glucose = [(1-&gt;4)-alpha-D-glucosyl](n+1) + ADP + H(+). The protein operates within glycan biosynthesis; starch biosynthesis. Functionally, involved in the synthesis of glycan chains within amylopectin in leaves. May play a regulatory role in the control of starch accumulation in plastids. In Arabidopsis thaliana (Mouse-ear cress), this protein is Starch synthase 3, chloroplastic/amyloplastic (SS3).